We begin with the raw amino-acid sequence, 162 residues long: NADH-quinone oxidoreductase subunit I (162 aa).

4Fe-4S ferredoxin-type domains are found at residues 52-82 (LRRY…IEAG) and 93-122 (TRYD…EGPN). [4Fe-4S] cluster is bound by residues C62, C65, C68, C72, C102, C105, C108, and C112.

Belongs to the complex I 23 kDa subunit family. NDH-1 is composed of 14 different subunits. Subunits NuoA, H, J, K, L, M, N constitute the membrane sector of the complex. [4Fe-4S] cluster serves as cofactor.

The protein resides in the cell inner membrane. It catalyses the reaction a quinone + NADH + 5 H(+)(in) = a quinol + NAD(+) + 4 H(+)(out). Functionally, NDH-1 shuttles electrons from NADH, via FMN and iron-sulfur (Fe-S) centers, to quinones in the respiratory chain. The immediate electron acceptor for the enzyme in this species is believed to be ubiquinone. Couples the redox reaction to proton translocation (for every two electrons transferred, four hydrogen ions are translocated across the cytoplasmic membrane), and thus conserves the redox energy in a proton gradient. This chain is NADH-quinone oxidoreductase subunit I, found in Methylorubrum populi (strain ATCC BAA-705 / NCIMB 13946 / BJ001) (Methylobacterium populi).